Here is a 161-residue protein sequence, read N- to C-terminus: Nucleotide-binding protein Swoo_3646 (161 aa).

Belongs to the YajQ family.

Its function is as follows. Nucleotide-binding protein. This is Nucleotide-binding protein Swoo_3646 from Shewanella woodyi (strain ATCC 51908 / MS32).